Here is a 210-residue protein sequence, read N- to C-terminus: Ribonuclease HII (210 aa).

Residues 18 to 210 (GLIAGVDEVG…FKPVKALLGL (193 aa)) form the RNase H type-2 domain. 3 residues coordinate a divalent metal cation: Asp24, Glu25, and Asp116.

This sequence belongs to the RNase HII family. It depends on Mn(2+) as a cofactor. Mg(2+) is required as a cofactor.

The protein resides in the cytoplasm. The catalysed reaction is Endonucleolytic cleavage to 5'-phosphomonoester.. Endonuclease that specifically degrades the RNA of RNA-DNA hybrids. The sequence is that of Ribonuclease HII from Shewanella baltica (strain OS223).